The sequence spans 227 residues: Ribosomal RNA large subunit methyltransferase E (227 aa).

Residues Gly-78, Trp-80, Asp-103, Asp-119, and Asp-143 each coordinate S-adenosyl-L-methionine. Residue Lys-183 is the Proton acceptor of the active site.

The protein belongs to the class I-like SAM-binding methyltransferase superfamily. RNA methyltransferase RlmE family.

It is found in the cytoplasm. It carries out the reaction uridine(2552) in 23S rRNA + S-adenosyl-L-methionine = 2'-O-methyluridine(2552) in 23S rRNA + S-adenosyl-L-homocysteine + H(+). Functionally, specifically methylates the uridine in position 2552 of 23S rRNA at the 2'-O position of the ribose in the fully assembled 50S ribosomal subunit. This Rickettsia bellii (strain RML369-C) protein is Ribosomal RNA large subunit methyltransferase E.